We begin with the raw amino-acid sequence, 345 residues long: Protein RecA (345 aa).

80–87 (GPESSGKT) is a binding site for ATP.

Belongs to the RecA family.

It localises to the cytoplasm. Functionally, can catalyze the hydrolysis of ATP in the presence of single-stranded DNA, the ATP-dependent uptake of single-stranded DNA by duplex DNA, and the ATP-dependent hybridization of homologous single-stranded DNAs. It interacts with LexA causing its activation and leading to its autocatalytic cleavage. The polypeptide is Protein RecA (Mycoplasma mycoides subsp. mycoides SC (strain CCUG 32753 / NCTC 10114 / PG1)).